Here is a 162-residue protein sequence, read N- to C-terminus: Ribosomal RNA large subunit methyltransferase H (162 aa).

Residue Gly108 participates in S-adenosyl-L-methionine binding.

Belongs to the RNA methyltransferase RlmH family. In terms of assembly, homodimer.

The protein resides in the cytoplasm. It catalyses the reaction pseudouridine(1915) in 23S rRNA + S-adenosyl-L-methionine = N(3)-methylpseudouridine(1915) in 23S rRNA + S-adenosyl-L-homocysteine + H(+). Specifically methylates the pseudouridine at position 1915 (m3Psi1915) in 23S rRNA. This Methylobacterium sp. (strain 4-46) protein is Ribosomal RNA large subunit methyltransferase H.